We begin with the raw amino-acid sequence, 603 residues long: MASEHLEHKLALLPDKPGCYLMKNINDQIIYVGKAKNLKNRVRSYFKSSHTGKVAKMVSEVADFETIVTSTNKESFLLEITLIQKHQPYFNIKLKKGTGYPYIKITNERDPQIKIVSKIKKDGGYYFGPYPNVYAAEETMHFIQKVYPLRRCNGYQGRPCLYYHMGQCLGACFKEVPKSDYEEQIKKIKSFLSGNTATVKRQLTKKMQRAAENMEFERAAEIRDQLHYIEVTVEKQKIISNDKTPRDLFNFYMDKGWLSIQIFFIRQARLMKREKRLFPIVDTAVEEMTSFILQFYNRRNNILPHEILLPKGLPNKEISEILGVPVRTPVRGEKRDLLAMAHENAQLSLDEKFRLLEMDQSKTTGAMKEITDALGLPEGHRIEAFDHSHIQGADPVSAMVVFINGEPAKNFYRKYKLKTVINHADEAASTREVIRRRYSRLLKENKPMPDMIFMDGGEIQMDAAKDVLENELGLEIPVVGMVKNDKHQTADLLFGDDDHHINLNPRSQGFYLVQRIQDEVHRFAITFHRRVHTKHSLSSRLDEIKGVGPRTRTKLLKKYGSITKIAQASVDEIHSLGINRPTAQLIKVSLQKNAEVAKGSSHD.

The 78-residue stretch at 15 to 92 (DKPGCYLMKN…IQKHQPYFNI (78 aa)) folds into the GIY-YIG domain. Residues 197–232 (ATVKRQLTKKMQRAAENMEFERAAEIRDQLHYIEVT) enclose the UVR domain.

Belongs to the UvrC family. As to quaternary structure, interacts with UvrB in an incision complex.

The protein resides in the cytoplasm. In terms of biological role, the UvrABC repair system catalyzes the recognition and processing of DNA lesions. UvrC both incises the 5' and 3' sides of the lesion. The N-terminal half is responsible for the 3' incision and the C-terminal half is responsible for the 5' incision. In Limosilactobacillus reuteri (strain DSM 20016) (Lactobacillus reuteri), this protein is UvrABC system protein C.